Here is a 532-residue protein sequence, read N- to C-terminus: MELDLSPPHLSSSPEDLCPAPGTPPGTPRPPDTPLPEEVKRSQPLLIPTTGRKLREEERRATSLPSIPNPFPELCSPPSQSPILGGPSSARGLLPRDASRPHVVKVYSEDGACRSVEVAAGATARHVCEMLVQRAHALSDETWGLVECHPHLALERGLEDHESVVEVQAAWPVGGDSRFVFRKNFAKYELFKSSPHSLFPEKMVSSCLDAHTGISHEDLIQNFLNAGSFPEIQGFLQLRGSGRKLWKRFFCFLRRSGLYYSTKGTSKDPRHLQYVADVNESNVYVVTQGRKLYGMPTDFGFCVKPNKLRNGHKGLRIFCSEDEQSRTCWLAAFRLFKYGVQLYKNYQQAQSRHLHPSCLGSPPLRSASDNTLVAMDFSGHAGRVIENPREALSVALEEAQAWRKKTNHRLSLPMPASGTSLSAAIHRTQLWFHGRISREESQRLIGQQGLVDGLFLVRESQRNPQGFVLSLCHLQKVKHYLILPSEEEGRLYFSMDDGQTRFTDLLQLVEFHQLNRGILPCLLRHCCTRVAL.

Over residues 1–20 (MELDLSPPHLSSSPEDLCPA) the composition is skewed to low complexity. Residues 1–96 (MELDLSPPHL…PSSARGLLPR (96 aa)) are disordered. Positions 21 to 34 (PGTPPGTPRPPDTP) are enriched in pro residues. The Ras-associating domain maps to 100–186 (RPHVVKVYSE…SRFVFRKNFA (87 aa)). Phosphotyrosine; by FAK1 is present on residues Y188 and Y338. In terms of domain architecture, PH spans 229–338 (FPEIQGFLQL…WLAAFRLFKY (110 aa)). S361 carries the post-translational modification Phosphoserine. Residues 431–527 (WFHGRISREE…ILPCLLRHCC (97 aa)) form the SH2 domain.

This sequence belongs to the GRB7/10/14 family. As to quaternary structure, homodimer. Interacts (via SH2 domain) with EGFR, ERBB2, ERBB3 (when phosphorylated), ERBB4 (when phosphorylated), EPHB1, INSR, FGFR1, PDGFRA (tyrosine phosphorylated) and PDGFRB (tyrosine phosphorylated). Interacts with SHC1. Interacts with RND1. Interacts (when tyrosine phosphorylated) with FHL2 and HAX1. Interacts (via SH2 domain) with RET and PTK2/FAK1. Interacts (when not phosphorylated) with ELAVL1. In stressed cells, but not in normal cells, part of a complex that contains at least GRB7, PTK2/FAK1, STAU1, ELAVL1 and TIA1. Interacts (via SH2 domain) with KIT (phosphorylated). Interacts (via SH2 domain) with TEK/TIE2 (tyrosine phosphorylated). Post-translationally, phosphorylated on serine and threonine residues in response to heregulin. Phosphorylated on tyrosine residues by TEK/TIE2. Phosphorylated on tyrosine residues in response to NTN1 signaling. Phosphorylation promotes stress granule disassembly during recovery after cellular stress. Phosphorylated on tyrosine residues by PTK2/FAK1, and possibly also other kinases. Phosphorylation is enhanced by activation of receptor kinases. Tyrosine phosphorylation is essential for activation of down-stream protein kinases.

Its subcellular location is the cytoplasm. The protein resides in the cell junction. It localises to the focal adhesion. It is found in the cell membrane. The protein localises to the cytoplasmic granule. Its subcellular location is the cell projection. Functionally, adapter protein that interacts with the cytoplasmic domain of numerous receptor kinases and modulates down-stream signaling. Promotes activation of down-stream protein kinases, including STAT3, AKT1, MAPK1 and/or MAPK3. Promotes activation of HRAS. Plays a role in signal transduction in response to EGF. Plays a role in the regulation of cell proliferation and cell migration. Plays a role in the assembly and stability of RNA stress granules. Binds to the 5'UTR of target mRNA molecules and represses translation of target mRNA species, when not phosphorylated. Phosphorylation impairs RNA binding and promotes stress granule disassembly during recovery after cellular stress. The chain is Growth factor receptor-bound protein 7 (GRB7) from Homo sapiens (Human).